A 499-amino-acid polypeptide reads, in one-letter code: Glycerol kinase (499 aa).

T13 serves as a coordination point for ADP. Residues T13, T14, and S15 each coordinate ATP. T13 provides a ligand contact to sn-glycerol 3-phosphate. R17 lines the ADP pocket. Positions 83, 84, 135, and 244 each coordinate sn-glycerol 3-phosphate. Glycerol-binding residues include R83, E84, Y135, D244, and Q245. 2 residues coordinate ADP: T266 and G309. ATP-binding residues include T266, G309, Q313, and G410. 2 residues coordinate ADP: G410 and N414.

Belongs to the FGGY kinase family.

It catalyses the reaction glycerol + ATP = sn-glycerol 3-phosphate + ADP + H(+). It functions in the pathway polyol metabolism; glycerol degradation via glycerol kinase pathway; sn-glycerol 3-phosphate from glycerol: step 1/1. Inhibited by fructose 1,6-bisphosphate (FBP). Functionally, key enzyme in the regulation of glycerol uptake and metabolism. Catalyzes the phosphorylation of glycerol to yield sn-glycerol 3-phosphate. The polypeptide is Glycerol kinase (Paraburkholderia phymatum (strain DSM 17167 / CIP 108236 / LMG 21445 / STM815) (Burkholderia phymatum)).